The following is a 349-amino-acid chain: Rhodopsin (349 aa).

Topologically, residues 1 to 33 are extracellular; it reads TEGPYFYIPMSNATGIVRSPYEYPQYYLVYPAA. An N-linked (GlcNAc...) asparagine glycan is attached at asparagine 12. A helical membrane pass occupies residues 34–58; that stretch reads YAVLGAYMFFLIIFGFPVNFLTLYV. Over 59–70 the chain is Cytoplasmic; that stretch reads TIEHKKLRTPLN. Residues 71 to 93 form a helical membrane-spanning segment; it reads YILLNLAVADLFMVIGGFTTTIY. Residues 94–107 are Extracellular-facing; it reads TSMHGYFVLGRLGC. Cysteines 107 and 184 form a disulfide. The chain crosses the membrane as a helical span at residues 108-130; the sequence is NLEGFSATLGGMIGLWSLVVLAI. The 'Ionic lock' involved in activated form stabilization signature appears at 131-133; it reads ERW. Topologically, residues 131–149 are cytoplasmic; that stretch reads ERWVVVCKPMSNFRFGENH. Residues 150-170 form a helical membrane-spanning segment; it reads AIMGVTLTWVMGLACTVPPLV. At 171–199 the chain is on the extracellular side; sequence GWSRYIPEGMQCSCGIDYYTRAEGFNNDS. Asparagine 197 carries an N-linked (GlcNAc...) asparagine glycan. A helical membrane pass occupies residues 200 to 221; that stretch reads YVLYMFVCHFLIPLVVIFFCYG. Topologically, residues 222 to 249 are cytoplasmic; it reads RLLCAVKEAAAAQQESETTQRAEREVTR. A helical membrane pass occupies residues 250–271; that stretch reads MVILMVIGFLVCWLPYASVAWY. The Extracellular segment spans residues 272–283; it reads IFTHQGSEFGPL. The helical transmembrane segment at 284–305 threads the bilayer; it reads FMTIPAFFAKSSSIYNPVIYIC. Position 293 is an N6-(retinylidene)lysine (lysine 293). Over 306–349 the chain is Cytoplasmic; the sequence is MNKQFRQCMLTTLFCGKNPFEEEEGASSTKTEASSASSSSVSPA. Cysteine 320 carries the S-palmitoyl cysteine lipid modification. Residues 326–349 form a disordered region; sequence EEEEGASSTKTEASSASSSSVSPA. The segment covering 331–349 has biased composition (low complexity); the sequence is ASSTKTEASSASSSSVSPA.

The protein belongs to the G-protein coupled receptor 1 family. Opsin subfamily. In terms of processing, phosphorylated on some or all of the serine and threonine residues present in the C-terminal region. Post-translationally, contains one covalently linked retinal chromophore.

It is found in the membrane. It localises to the cell projection. The protein localises to the cilium. Its subcellular location is the photoreceptor outer segment. In terms of biological role, photoreceptor required for image-forming vision at low light intensity. While most salt water fish species use retinal as chromophore, most freshwater fish use 3-dehydroretinal, or a mixture of retinal and 3-dehydroretinal. Light-induced isomerization of 11-cis to all-trans retinal triggers a conformational change that activates signaling via G-proteins. Subsequent receptor phosphorylation mediates displacement of the bound G-protein alpha subunit by arrestin and terminates signaling. This chain is Rhodopsin (rho), found in Myripristis violacea (Lattice soldierfish).